A 715-amino-acid polypeptide reads, in one-letter code: 1,4-alpha-glucan branching enzyme GlgB (715 aa).

The Nucleophile role is filled by D396. Catalysis depends on E449, which acts as the Proton donor.

It belongs to the glycosyl hydrolase 13 family. GlgB subfamily. In terms of assembly, monomer.

The enzyme catalyses Transfers a segment of a (1-&gt;4)-alpha-D-glucan chain to a primary hydroxy group in a similar glucan chain.. The protein operates within glycan biosynthesis; glycogen biosynthesis. Functionally, catalyzes the formation of the alpha-1,6-glucosidic linkages in glycogen by scission of a 1,4-alpha-linked oligosaccharide from growing alpha-1,4-glucan chains and the subsequent attachment of the oligosaccharide to the alpha-1,6 position. The protein is 1,4-alpha-glucan branching enzyme GlgB of Aliivibrio fischeri (strain ATCC 700601 / ES114) (Vibrio fischeri).